We begin with the raw amino-acid sequence, 409 residues long: Putative competence-damage inducible protein (409 aa).

It belongs to the CinA family.

The protein is Putative competence-damage inducible protein of Clostridium botulinum (strain Loch Maree / Type A3).